A 391-amino-acid polypeptide reads, in one-letter code: Putative glutamate--cysteine ligase 2-2 (391 aa).

This sequence belongs to the glutamate--cysteine ligase type 2 family. YbdK subfamily.

The catalysed reaction is L-cysteine + L-glutamate + ATP = gamma-L-glutamyl-L-cysteine + ADP + phosphate + H(+). ATP-dependent carboxylate-amine ligase which exhibits weak glutamate--cysteine ligase activity. The sequence is that of Putative glutamate--cysteine ligase 2-2 from Saccharopolyspora erythraea (strain ATCC 11635 / DSM 40517 / JCM 4748 / NBRC 13426 / NCIMB 8594 / NRRL 2338).